The sequence spans 554 residues: Flavin-dependent halogenase ascD (554 aa).

Residues glycine 15, glycine 18, and glutamate 48 each coordinate FAD. 2 residues coordinate chloride: serine 331 and glycine 332. An FAD-binding site is contributed by valine 333.

It belongs to the flavin-dependent halogenase family.

It carries out the reaction ilicicolin B + FADH2 + chloride + O2 = ilicicolin A + FAD + 2 H2O + H(+). It participates in secondary metabolite biosynthesis; terpenoid biosynthesis. Its function is as follows. Flavin-dependent halogenase; part of the asc-1 gene cluster that mediates the biosynthesis of both ascochlorin and ascofuranone, a strong inhibitor of cyanide-insensitive alternative oxidases and a promising drug candidate against African trypanosomiasis. The first step in the pathway is performed by the non-reducing polyketide synthase ascC that produces orsellinic acid by condensing acetyl-CoA with 3 malonyl-CoA units. Orsellinic acid is then prenylated by the prenyltransferase ascA to yield ilicicolinic acid B. Ilicicolinic acid B is further reduced to ilicicolin B by the reductase ascB. The halogenase ascD then chlorinates ilicicolin B to produce ilicicolin A which is converted to ilicicolin A epoxide by the cytochrome P450 monooxygenase ascE that catalyzes stereoselective epoxidation of the terminal double bond of the prenyl group. Ilicicolin A epoxide is the last common precursor for the biosynthesis of ascofuranone and ascochlorin. The terpene cyclase ascF produces a monocyclic terpene, and the cyclization reaction is proposed to be initiated by protonation of the terminal epoxide of ilicicolin A epoxide to generate a monocyclic tertiarycation, which is followed by a series of hydride and methyl shifts with abstraction of proton, leading to the formation of the (14S,15R,19R)-trimethylcyclohexanone ring structure of ilicicolin C, which is finally reduced to ascochlorin by the dehydrogenase ascG. On the other hand, ilicicolin A epoxide is hydroxylated by the cytochrome P450 monooxygenase ascH, and the resultant product is cyclized by the terpene cyclase ascI to ascofuranol via protonation-initiated epoxide ring opening, which facilitates the 6-endo-tet cyclization to form the tetrahy-drofuran ring. Finally, ascofuranol is oxidized into ascofuranone by ascJ. This chain is Flavin-dependent halogenase ascD, found in Acremonium egyptiacum (Oospora egyptiaca).